A 353-amino-acid polypeptide reads, in one-letter code: Photosystem II protein D1 (353 aa).

N-acetylthreonine is present on Thr-2. A Phosphothreonine modification is found at Thr-2. 3 consecutive transmembrane segments (helical) span residues Tyr-29–Ser-46, His-118–Leu-133, and Trp-142–Ala-156. His-118 lines the chlorophyll a pocket. Position 126 (Tyr-126) interacts with pheophytin a. 2 residues coordinate [CaMn4O5] cluster: Asp-170 and Glu-189. A helical transmembrane segment spans residues Phe-197–Leu-218. Chlorophyll a is bound at residue His-198. Residues His-215 and Ser-264 to Phe-265 contribute to the a quinone site. His-215 contributes to the Fe cation binding site. A Fe cation-binding site is contributed by His-272. A helical transmembrane segment spans residues Phe-274–Leu-288. Residues His-332, Glu-333, Asp-342, and Ala-344 each coordinate [CaMn4O5] cluster. Positions Ser-345–Gly-353 are excised as a propeptide.

This sequence belongs to the reaction center PufL/M/PsbA/D family. As to quaternary structure, PSII is composed of 1 copy each of membrane proteins PsbA, PsbB, PsbC, PsbD, PsbE, PsbF, PsbH, PsbI, PsbJ, PsbK, PsbL, PsbM, PsbT, PsbX, PsbY, PsbZ, Psb30/Ycf12, at least 3 peripheral proteins of the oxygen-evolving complex and a large number of cofactors. It forms dimeric complexes. Requires The D1/D2 heterodimer binds P680, chlorophylls that are the primary electron donor of PSII, and subsequent electron acceptors. It shares a non-heme iron and each subunit binds pheophytin, quinone, additional chlorophylls, carotenoids and lipids. D1 provides most of the ligands for the Mn4-Ca-O5 cluster of the oxygen-evolving complex (OEC). There is also a Cl(-1) ion associated with D1 and D2, which is required for oxygen evolution. The PSII complex binds additional chlorophylls, carotenoids and specific lipids. as cofactor. In terms of processing, tyr-161 forms a radical intermediate that is referred to as redox-active TyrZ, YZ or Y-Z. C-terminally processed by CTPA; processing is essential to allow assembly of the oxygen-evolving complex and thus photosynthetic growth.

It is found in the plastid. It localises to the chloroplast thylakoid membrane. The catalysed reaction is 2 a plastoquinone + 4 hnu + 2 H2O = 2 a plastoquinol + O2. In terms of biological role, photosystem II (PSII) is a light-driven water:plastoquinone oxidoreductase that uses light energy to abstract electrons from H(2)O, generating O(2) and a proton gradient subsequently used for ATP formation. It consists of a core antenna complex that captures photons, and an electron transfer chain that converts photonic excitation into a charge separation. The D1/D2 (PsbA/PsbD) reaction center heterodimer binds P680, the primary electron donor of PSII as well as several subsequent electron acceptors. The sequence is that of Photosystem II protein D1 from Stigeoclonium helveticum (Green alga).